The sequence spans 131 residues: D-ribose pyranase (131 aa).

H20 (proton donor) is an active-site residue. Substrate-binding positions include D28, H98, and 120–122; that span reads YAN.

Belongs to the RbsD / FucU family. RbsD subfamily. In terms of assembly, homodecamer.

Its subcellular location is the cytoplasm. It carries out the reaction beta-D-ribopyranose = beta-D-ribofuranose. It participates in carbohydrate metabolism; D-ribose degradation; D-ribose 5-phosphate from beta-D-ribopyranose: step 1/2. Its function is as follows. Catalyzes the interconversion of beta-pyran and beta-furan forms of D-ribose. The polypeptide is D-ribose pyranase (Bacillus cereus (strain ATCC 14579 / DSM 31 / CCUG 7414 / JCM 2152 / NBRC 15305 / NCIMB 9373 / NCTC 2599 / NRRL B-3711)).